Reading from the N-terminus, the 878-residue chain is Pyruvate dehydrogenase phosphatase regulatory subunit, mitochondrial (878 aa).

Residues 1–26 constitute a mitochondrion transit peptide; sequence MLPRLLAVVRGPGSCRGWREGSPARG.

The protein belongs to the GcvT family. Heterodimer of a catalytic (PDP1) and a regulatory (PDPR) subunit.

The protein localises to the mitochondrion matrix. Its function is as follows. Decreases the sensitivity of PDP1 to magnesium ions, and this inhibition is reversed by the polyamine spermine. In Bos taurus (Bovine), this protein is Pyruvate dehydrogenase phosphatase regulatory subunit, mitochondrial (PDPR).